A 234-amino-acid polypeptide reads, in one-letter code: Glutamine synthetase (234 aa).

The GS catalytic domain maps to 1–234 (KAQEPWFGIE…TRLLVETTLL (234 aa)). The interval 126-157 (GSGGHVNFSNRQPESPPAGKQSRSSAKKLGKR) is disordered.

It belongs to the glutamine synthetase family. In terms of assembly, homooctamer.

Its subcellular location is the cytoplasm. The catalysed reaction is L-glutamate + NH4(+) + ATP = L-glutamine + ADP + phosphate + H(+). The sequence is that of Glutamine synthetase from Dunaliella salina (Green alga).